The chain runs to 315 residues: Olfactory receptor 4A8 (315 aa).

The Extracellular portion of the chain corresponds to methionine 1–alanine 24. Asparagine 6 is a glycosylation site (N-linked (GlcNAc...) asparagine). The chain crosses the membrane as a helical span at residues leucine 25 to valine 45. At serine 46–valine 57 the chain is on the cytoplasmic side. Residues tyrosine 58 to isoleucine 80 traverse the membrane as a helical segment. The Extracellular segment spans residues valine 81–cysteine 95. Cysteine 95 and cysteine 177 form a disulfide bridge. Residues methionine 96–methionine 116 form a helical membrane-spanning segment. The Cytoplasmic segment spans residues alanine 117–cysteine 139. The helical transmembrane segment at isoleucine 140 to valine 160 threads the bilayer. At valine 161 to valine 193 the chain is on the extracellular side. Residues glycine 194–isoleucine 214 traverse the membrane as a helical segment. The Cytoplasmic portion of the chain corresponds to serine 215–proline 235. A helical membrane pass occupies residues phenylalanine 236–tyrosine 256. The Extracellular segment spans residues valine 257–aspartate 266. Residues lysine 267–leucine 287 form a helical membrane-spanning segment. Residues arginine 288–asparagine 315 are Cytoplasmic-facing.

Belongs to the G-protein coupled receptor 1 family.

It is found in the cell membrane. In terms of biological role, odorant receptor. The protein is Olfactory receptor 4A8 (OR4A8) of Homo sapiens (Human).